A 206-amino-acid polypeptide reads, in one-letter code: Ribosomal RNA large subunit methyltransferase E (206 aa).

S-adenosyl-L-methionine is bound by residues G60, W62, D80, D96, and D121. Catalysis depends on K161, which acts as the Proton acceptor.

It belongs to the class I-like SAM-binding methyltransferase superfamily. RNA methyltransferase RlmE family.

Its subcellular location is the cytoplasm. It carries out the reaction uridine(2552) in 23S rRNA + S-adenosyl-L-methionine = 2'-O-methyluridine(2552) in 23S rRNA + S-adenosyl-L-homocysteine + H(+). Its function is as follows. Specifically methylates the uridine in position 2552 of 23S rRNA at the 2'-O position of the ribose in the fully assembled 50S ribosomal subunit. This Saccharophagus degradans (strain 2-40 / ATCC 43961 / DSM 17024) protein is Ribosomal RNA large subunit methyltransferase E.